We begin with the raw amino-acid sequence, 245 residues long: Uridylate kinase (245 aa).

Residue lysine 18–glycine 21 participates in ATP binding. UMP is bound at residue glycine 60. Glycine 61 and arginine 65 together coordinate ATP. UMP-binding positions include aspartate 80 and threonine 141–threonine 148. ATP-binding residues include threonine 168, tyrosine 174, and aspartate 177.

This sequence belongs to the UMP kinase family. Homohexamer.

It is found in the cytoplasm. It catalyses the reaction UMP + ATP = UDP + ADP. It functions in the pathway pyrimidine metabolism; CTP biosynthesis via de novo pathway; UDP from UMP (UMPK route): step 1/1. With respect to regulation, inhibited by UTP. In terms of biological role, catalyzes the reversible phosphorylation of UMP to UDP. In Pseudomonas paraeruginosa (strain DSM 24068 / PA7) (Pseudomonas aeruginosa (strain PA7)), this protein is Uridylate kinase.